Here is a 26-residue protein sequence, read N- to C-terminus: Nicotinic acetylcholine receptor-binding protein Mnn-1A (26 aa).

Cysteines 3 and 22 form a disulfide.

The protein belongs to the three-finger toxin family. Short-chain subfamily. Expressed by the venom gland.

It localises to the secreted. Its function is as follows. Binds and may inhibit nicotinic acetylcholine receptors (nAChR). The polypeptide is Nicotinic acetylcholine receptor-binding protein Mnn-1A (Micrurus nigrocinctus (Central American coral snake)).